The following is a 65-amino-acid chain: Large ribosomal subunit protein uL29 (65 aa).

The protein belongs to the universal ribosomal protein uL29 family.

In Acidithiobacillus ferrooxidans (strain ATCC 23270 / DSM 14882 / CIP 104768 / NCIMB 8455) (Ferrobacillus ferrooxidans (strain ATCC 23270)), this protein is Large ribosomal subunit protein uL29.